A 130-amino-acid chain; its full sequence is Type VII secretion system extracellular protein C (130 aa).

The protein belongs to the EsxC family. Forms both homodimers and heterodimers with EsxA. Homodimerization is calcium-dependent.

It is found in the secreted. Implements its pathogenic function during infection. The sequence is that of Type VII secretion system extracellular protein C from Staphylococcus aureus (strain Mu50 / ATCC 700699).